Consider the following 577-residue polypeptide: Pentatricopeptide repeat-containing protein At1g63400 (577 aa).

PPR repeat units lie at residues 49–83 (GSGD…RPLP), 84–118 (SIFE…GISH), 119–153 (NLYT…GYEP), 154–188 (SIVT…GYRP), 189–223 (DTIT…GCQP), 224–258 (NLVT…KIEA), 259–293 (NVVI…GVRP), 294–328 (NVIT…KINP), 329–363 (NVVT…SIDP), 364–398 (DIFT…DCFP), 399–433 (NVVT…GLVG), 434–468 (NTVT…GVHP), 469–503 (NIMT…KMEP), 504–538 (TIYT…GVKP), and 539–573 (DVII…GPLP).

Belongs to the PPR family. P subfamily.

The sequence is that of Pentatricopeptide repeat-containing protein At1g63400 from Arabidopsis thaliana (Mouse-ear cress).